A 911-amino-acid chain; its full sequence is Inter-alpha-trypsin inhibitor heavy chain H1 (911 aa).

Residues 1–27 form the signal peptide; sequence MDGAMGPRGLLLCMYLVSLLILQAMPA. Positions 28 to 34 are excised as a propeptide; the sequence is LGSATGR. In terms of domain architecture, VIT spans 37–166; it reads SSEKRQAVDT…KVTFQLTYEE (130 aa). C60 carries an S-linked (Hex...) cysteine glycan. Residue S129 is modified to Phosphoserine. The short motif at 181-184 is the Phagocytosis uptake signal element; the sequence is VKPK. Cystine bridges form between C244–C247 and C268–C540. N285 carries N-linked (GlcNAc...) (complex) asparagine glycosylation. One can recognise a VWFA domain in the interval 290-450; the sequence is NKNVVFVIDI…FNFLEVMSME (161 aa). The segment at 387–911 is hyaluronan-binding; the sequence is SLPELSNHAS…YTDYIVPDIF (525 aa). A phosphothreonine mark is found at T402 and T407. N588 carries an N-linked (GlcNAc...) (complex) asparagine glycan. Residue T653 is glycosylated (O-linked (GalNAc...) threonine). An Aspartate 1-(chondroitin 4-sulfate)-ester modification is found at D672. Positions 673–911 are excised as a propeptide; that stretch reads PHFIIHVPQK…YTDYIVPDIF (239 aa). N-linked (GlcNAc...) asparagine glycosylation is present at N750.

Belongs to the ITIH family. I-alpha-I plasma protease inhibitors are assembled from one or two heavy chains (HC) and one light chain, bikunin. Inter-alpha-inhibitor (I-alpha-I) is composed of ITIH1/HC1, ITIH2/HC2 and bikunin. Interacts with TNFAIP6 (via Link and CUB domains). Heavy chains are linked to bikunin via chondroitin 4-sulfate esterified to the alpha-carboxyl of the C-terminal aspartate after propeptide cleavage. Post-translationally, the S-linked glycan is composed of two 6-carbon sugars, possibly Glc or Gal.

The protein localises to the secreted. In terms of biological role, may act as a carrier of hyaluronan in serum or as a binding protein between hyaluronan and other matrix protein, including those on cell surfaces in tissues to regulate the localization, synthesis and degradation of hyaluronan which are essential to cells undergoing biological processes. Its function is as follows. Contains a potential peptide which could stimulate a broad spectrum of phagocytotic cells. The chain is Inter-alpha-trypsin inhibitor heavy chain H1 (ITIH1) from Homo sapiens (Human).